The sequence spans 123 residues: Small ribosomal subunit protein uS12 (123 aa).

The disordered stretch occupies residues 1-28 (MPTIQQLIRKPRQPKVKRSKSQHLEQCP). Residues 9–21 (RKPRQPKVKRSKS) are compositionally biased toward basic residues. D89 bears the 3-methylthioaspartic acid mark.

This sequence belongs to the universal ribosomal protein uS12 family. In terms of assembly, part of the 30S ribosomal subunit. Contacts proteins S8 and S17. May interact with IF1 in the 30S initiation complex.

Its function is as follows. With S4 and S5 plays an important role in translational accuracy. Interacts with and stabilizes bases of the 16S rRNA that are involved in tRNA selection in the A site and with the mRNA backbone. Located at the interface of the 30S and 50S subunits, it traverses the body of the 30S subunit contacting proteins on the other side and probably holding the rRNA structure together. The combined cluster of proteins S8, S12 and S17 appears to hold together the shoulder and platform of the 30S subunit. This Ruegeria pomeroyi (strain ATCC 700808 / DSM 15171 / DSS-3) (Silicibacter pomeroyi) protein is Small ribosomal subunit protein uS12.